The sequence spans 34 residues: Photosystem II reaction center protein M (34 aa).

A helical membrane pass occupies residues 5–25 (ILAFIATALFILVPTAFLLII).

The protein belongs to the PsbM family. As to quaternary structure, PSII is composed of 1 copy each of membrane proteins PsbA, PsbB, PsbC, PsbD, PsbE, PsbF, PsbH, PsbI, PsbJ, PsbK, PsbL, PsbM, PsbT, PsbX, PsbY, PsbZ, Psb30/Ycf12, at least 3 peripheral proteins of the oxygen-evolving complex and a large number of cofactors. It forms dimeric complexes.

The protein resides in the plastid. The protein localises to the chloroplast thylakoid membrane. One of the components of the core complex of photosystem II (PSII). PSII is a light-driven water:plastoquinone oxidoreductase that uses light energy to abstract electrons from H(2)O, generating O(2) and a proton gradient subsequently used for ATP formation. It consists of a core antenna complex that captures photons, and an electron transfer chain that converts photonic excitation into a charge separation. This subunit is found at the monomer-monomer interface. The polypeptide is Photosystem II reaction center protein M (Coffea arabica (Arabian coffee)).